Here is a 987-residue protein sequence, read N- to C-terminus: 110 kDa U5 small nuclear ribonucleoprotein component CLO (987 aa).

Positions 1-54 (MESSLYDEFGNYVGPEIESDRDSDDEVEDEDLQDKHLEENGSDGEQGPGGSNGW) are disordered. Over residues 17-32 (IESDRDSDDEVEDEDL) the composition is skewed to acidic residues. The tr-type G domain maps to 136–422 (ALVRNVALVG…LGVTLSNSAY (287 aa)). Residues 145–152 (GHLQHGKT) form a G1 region. A GTP-binding site is contributed by 145 to 152 (GHLQHGKT). The interval 189–193 (NISIK) is G2. The segment at 215-218 (DTPG) is G3. GTP-binding positions include 215-219 (DTPGH) and 269-272 (NKVD). The interval 269 to 272 (NKVD) is G4. The interval 395 to 397 (YSQ) is G5.

Belongs to the TRAFAC class translation factor GTPase superfamily. Classic translation factor GTPase family. In terms of assembly, interacts with BRR2A and PRP8A. As to expression, expressed in flower buds, open flowers and siliques. Expressed at low levels in rosettes leaves, cauline leaves and stems.

Its subcellular location is the nucleus speckle. Its function is as follows. Splicing factor involved in pre-mRNA splicing and component of the spliceosome. Essential for reproduction. In female gametophyte, is necessary for the egg cell and central cell fate determination and hence reproductive success. Involved in a mechanism that prevents accessory cells from adopting gametic cell fate. Is necessary to restrict LIS expression to interfere with egg-cell specification. Probable component of U5 small nuclear ribonucleoprotein (snRNP) that is required for pre-mRNA splicing. Plays an essential role in female gametogenesis and embryo development. Required for the control of polarized cell growth and cell proliferation during floral organ morphogenesis. The chain is 110 kDa U5 small nuclear ribonucleoprotein component CLO from Arabidopsis thaliana (Mouse-ear cress).